Here is a 526-residue protein sequence, read N- to C-terminus: Microphthalmia-associated transcription factor (526 aa).

Residues 20–54 (EPKTYYELKSQPLKSSSSAEHSGASKPPLSSSTMT) form a disordered region. Residues 34–44 (SSSSAEHSGAS) show a composition bias toward low complexity. S180 is subject to Phosphoserine; by MAPK. Residue K289 forms a Glycyl lysine isopeptide (Lys-Gly) (interchain with G-Cter in SUMO) linkage. The bHLH domain occupies 311 to 364 (QKKDNHNLIERRRRFNINDRIKELGTLIPKSNDPDMRWNKGTILKASVDYIRKL). Residues 355-401 (KASVDYIRKLQREQQRAKDLENRQKKLEHANRHLLLRVQELEMQARA) adopt a coiled-coil conformation. Positions 374-395 (LENRQKKLEHANRHLLLRVQEL) are leucine-zipper. S405 is modified (phosphoserine; by GSK3). At S414 the chain carries Phosphoserine. A Glycyl lysine isopeptide (Lys-Gly) (interchain with G-Cter in SUMO) cross-link involves residue K423. A Phosphoserine modification is found at S491. The interval 496-526 (TDPLLSSVSPGASKTSSRRSSMSAEETEHAC) is disordered. The segment covering 507 to 519 (ASKTSSRRSSMSA) has biased composition (low complexity). Phosphoserine; by RPS6KA1 is present on S516.

This sequence belongs to the MiT/TFE family. Homodimer or heterodimer; dimerization is mediated via the coiled coil region. Efficient DNA binding requires dimerization with another bHLH protein. Binds DNA in the form of homodimer or heterodimer with either TFE3, TFEB or TFEC. Identified in a complex with HINT1 and CTNNB1. Interacts with KARS1. Interacts with VSX2. In terms of processing, phosphorylation at Ser-405 significantly enhances the ability to bind the tyrosinase promoter. Phosphorylated at Ser-180 and Ser-516 following KIT signaling, triggering a short live activation: Phosphorylation at Ser-180 and Ser-516 by MAPK and RPS6KA1, respectively, activate the transcription factor activity but also promote ubiquitination and subsequent degradation by the proteasome. Phosphorylated in response to blue light (415nm). Post-translationally, ubiquitinated following phosphorylation at Ser-180, leading to subsequent degradation by the proteasome. Deubiquitinated by USP13, preventing its degradation.

It is found in the nucleus. Its subcellular location is the cytoplasm. Functionally, transcription factor that regulates the expression of genes with essential roles in cell differentiation, proliferation and survival. Binds to M-boxes (5'-TCATGTG-3') and symmetrical DNA sequences (E-boxes) (5'-CACGTG-3') found in the promoters of target genes, such as BCL2 and tyrosinase (TYR). Plays an important role in melanocyte development by regulating the expression of tyrosinase (TYR) and tyrosinase-related protein 1 (TYRP1). Plays a critical role in the differentiation of various cell types, such as neural crest-derived melanocytes, mast cells, osteoclasts and optic cup-derived retinal pigment epithelium. The protein is Microphthalmia-associated transcription factor (Mitf) of Rattus norvegicus (Rat).